The chain runs to 390 residues: Protein dom34 (390 aa).

Belongs to the eukaryotic release factor 1 family. Pelota subfamily. As to quaternary structure, component of the Dom34-Hbs1 complex, also named Pelota-HBS1L complex, composed of dom34 and hbs1. A divalent metal cation is required as a cofactor.

It localises to the cytoplasm. Its function is as follows. Component of the Dom34-Hbs1 complex, a complex that recognizes stalled ribosomes and triggers the No-Go Decay (NGD) pathway. In the Dom34-Hbs1 complex, dom34 recognizes ribosomes stalled at the 3' end of an mRNA and engages stalled ribosomes by destabilizing mRNA in the mRNA channel. Following ribosome-binding, the Dom34-Hbs1 complex promotes the disassembly of stalled ribosomes, followed by degradation of damaged mRNAs as part of the NGD pathway. The chain is Protein dom34 from Schizosaccharomyces pombe (strain 972 / ATCC 24843) (Fission yeast).